A 152-amino-acid polypeptide reads, in one-letter code: MMKKIDVKILDPRVGKEFPLPTYATSGSAGLDLRACLDDAVELAPGDTTLVPTGLAIHIADPSLAAMMLPRSGLGHKHGIVLGNLVGLIDSDYQGQLMISVWNRGQDSFTIQPGERIAQMIFVPVVQAEFNLVEDFDATDRGEGGFGHSGRQ.

Substrate-binding positions include 71–73 (RSG), Asn84, 88–90 (LID), and Met98.

The protein belongs to the dUTPase family. In terms of assembly, homotrimer. Requires Mg(2+) as cofactor.

The enzyme catalyses dUTP + H2O = dUMP + diphosphate + H(+). The protein operates within pyrimidine metabolism; dUMP biosynthesis; dUMP from dCTP (dUTP route): step 2/2. Its function is as follows. This enzyme is involved in nucleotide metabolism: it produces dUMP, the immediate precursor of thymidine nucleotides and it decreases the intracellular concentration of dUTP so that uracil cannot be incorporated into DNA. In Escherichia coli O157:H7, this protein is Deoxyuridine 5'-triphosphate nucleotidohydrolase.